A 256-amino-acid chain; its full sequence is Kallikrein-15 (256 aa).

Positions 1-16 (MWLLLTLSFLLASTAA) are cleaved as a signal peptide. Residues 17 to 21 (QDGDK) constitute a propeptide, activation peptide. Positions 22–254 (LLEGDECAPH…YLEWIRETMK (233 aa)) constitute a Peptidase S1 domain. The cysteines at positions 47 and 63 are disulfide-linked. Catalysis depends on charge relay system residues His62 and Asp106. 3 disulfide bridges follow: Cys138-Cys215, Cys180-Cys194, and Cys205-Cys230. Asn171 is a glycosylation site (N-linked (GlcNAc...) asparagine). The active-site Charge relay system is Ser209. An N-linked (GlcNAc...) asparagine glycan is attached at Asn232.

It belongs to the peptidase S1 family. Kallikrein subfamily. Highest expression in the thyroid gland. Also expressed in the prostate, salivary, and adrenal glands and in the colon testis and kidney.

It is found in the secreted. In terms of biological role, protease whose physiological substrate is not yet known. This Homo sapiens (Human) protein is Kallikrein-15 (KLK15).